A 350-amino-acid chain; its full sequence is S-adenosylmethionine:tRNA ribosyltransferase-isomerase (350 aa).

The protein belongs to the QueA family. As to quaternary structure, monomer.

It localises to the cytoplasm. The enzyme catalyses 7-aminomethyl-7-carbaguanosine(34) in tRNA + S-adenosyl-L-methionine = epoxyqueuosine(34) in tRNA + adenine + L-methionine + 2 H(+). The protein operates within tRNA modification; tRNA-queuosine biosynthesis. In terms of biological role, transfers and isomerizes the ribose moiety from AdoMet to the 7-aminomethyl group of 7-deazaguanine (preQ1-tRNA) to give epoxyqueuosine (oQ-tRNA). The protein is S-adenosylmethionine:tRNA ribosyltransferase-isomerase of Vibrio vulnificus (strain CMCP6).